Here is a 183-residue protein sequence, read N- to C-terminus: Outer membrane protein H.8 (183 aa).

Positions Met1–Ala17 are cleaved as a signal peptide. Cys18 is lipidated: N-palmitoyl cysteine. Cys18 carries the S-diacylglycerol cysteine lipid modification. Positions Ala27–Ala51 are disordered. The region spanning Gly57 to Asp183 is the Plastocyanin-like domain. Residues His102, Cys166, His171, and Met175 each contribute to the Cu cation site.

The cofactor is Cu cation.

The protein localises to the cell outer membrane. This chain is Outer membrane protein H.8, found in Neisseria meningitidis serogroup B (strain ATCC BAA-335 / MC58).